The chain runs to 693 residues: Putative tyrosinase-like protein tyr-3 (693 aa).

A signal peptide spans 1 to 18 (MIRYIILLVYFLIFEVNS). The Cu cation site is built by His142, His152, His161, His281, His285, and His308. ShKT domains follow at residues 472–506 (CFNENECCGPWSAKGECQKNPVYMNVWCKASCRQC), 516–550 (CSDRHTNCAMWSRSGECNKNPLWMSENCRSSCQKC), 591–625 (CYNEDQCCPIWAQRGQCRSNPGYMTCQCKVSCGVC), and 634–667 (CADYHYDCAAWARRGECLKNKWMPENCRRSCNTC). 12 disulfide bridges follow: Cys472-Cys506, Cys479-Cys499, Cys488-Cys503, Cys516-Cys550, Cys523-Cys543, Cys532-Cys547, Cys591-Cys625, Cys598-Cys618, Cys607-Cys622, Cys634-Cys667, Cys641-Cys660, and Cys650-Cys664.

The protein belongs to the tyrosinase family. It depends on Cu(2+) as a cofactor.

The sequence is that of Putative tyrosinase-like protein tyr-3 (tyr-3) from Caenorhabditis elegans.